A 401-amino-acid polypeptide reads, in one-letter code: MIPGNRMLMVILLSQVLLGGTNYASLIPDTGKKKVAADIQGGGRRSPQSNELLRDFEVTLLQMFGLRKRPQPSKDVVVPAYMRDLYRLQSAEEEDELHDISMEYPETPTSRANTVRSFHHEEHLENLPGTEENGNFRFVFNLSSIPENEVISSAELRLYREQIDHGPAWDEGFHRINIYEVMKPITANGHMINRLLDTRVIHHNVTQWESFDVSPAIMRWTLDKQINHGLAIEVIHLNQTKTYQGKHVRISRSLLPQKDADWSQMRPLLITFSHDGRGHALTRRSKRSPKQQRPRKKNKHCRRHSLYVDFSDVGWNDWIVAPPGYQAFYCHGDCPFPLADHLNSTNHAIVQTLVNSVNSSIPKACCVPTELSAISMLYLDEYDKVVLKNYQEMVVEGCGCR.

The N-terminal stretch at 1 to 19 (MIPGNRMLMVILLSQVLLG) is a signal peptide. A propeptide spanning residues 20 to 287 (GTNYASLIPD…GHALTRRSKR (268 aa)) is cleaved from the precursor. 3 N-linked (GlcNAc...) asparagine glycosylation sites follow: asparagine 141, asparagine 204, and asparagine 238. Residues 279–299 (HALTRRSKRSPKQQRPRKKNK) form a disordered region. Residues 280-299 (ALTRRSKRSPKQQRPRKKNK) show a composition bias toward basic residues. 3 disulfide bridges follow: cysteine 301–cysteine 366, cysteine 330–cysteine 398, and cysteine 334–cysteine 400. 2 N-linked (GlcNAc...) asparagine glycosylation sites follow: asparagine 343 and asparagine 358.

This sequence belongs to the TGF-beta family. In terms of assembly, homodimer; disulfide-linked. Forms heterodimers with the TGF-beta family member derriere. Part of a complex consisting of twsg1 and chrd. Interacts with tsku.

The protein resides in the secreted. The protein localises to the extracellular space. It localises to the extracellular matrix. Functionally, posterior-ventralizing factor in Xenopus mesoderm induction. Induces posteroventral mesoderm and counteracts dorsalizing signals such as activin. The chain is Bone morphogenetic protein 4 (bmp4) from Xenopus laevis (African clawed frog).